We begin with the raw amino-acid sequence, 181 residues long: Protein Syd (181 aa).

Belongs to the Syd family.

It localises to the cell inner membrane. Interacts with the SecY protein in vivo. May bind preferentially to an uncomplexed state of SecY, thus functioning either as a chelating agent for excess SecY in the cell or as a regulatory factor that negatively controls the translocase function. In Shigella dysenteriae serotype 1 (strain Sd197), this protein is Protein Syd.